The chain runs to 228 residues: MSATKTLEAVARDRVGKGAARAVRRQGQIPAVIYGGNQAPEAIAVDLIRTRTLIYAGGFKTTLFDITVGGKKTRAIPRDYQLDPVSGVPLHVDFLRVVSGQTVTVDVPVHFVNDEKAPGIKQKGGTLNVALHTVSLDVAPDQIPDAIEVDLTGREIGDVIHASDLRLPAGTYTGEPTDTVANILPPTVLGAEVEAEEAAIAEAQSAEAAEEKAEAEAEATNEKNDTEE.

The disordered stretch occupies residues 198-228 (AAIAEAQSAEAAEEKAEAEAEATNEKNDTEE). A compositionally biased stretch (basic and acidic residues) spans 209-228 (AEEKAEAEAEATNEKNDTEE).

This sequence belongs to the bacterial ribosomal protein bL25 family. CTC subfamily. Part of the 50S ribosomal subunit; part of the 5S rRNA/L5/L18/L25 subcomplex. Contacts the 5S rRNA. Binds to the 5S rRNA independently of L5 and L18.

Functionally, this is one of the proteins that binds to the 5S RNA in the ribosome where it forms part of the central protuberance. In Methylorubrum populi (strain ATCC BAA-705 / NCIMB 13946 / BJ001) (Methylobacterium populi), this protein is Large ribosomal subunit protein bL25.